The following is a 354-amino-acid chain: LAS seventeen-binding protein 5 (354 aa).

Residues 15-161 (TIFRIVSSRD…LGQTVKQRYS (147 aa)) enclose the VHS domain. 2 disordered regions span residues 160–184 (YSKS…DDSA) and 296–354 (SAQD…HNKI). The span at 296 to 310 (SAQDDSSDESDHGSY) shows a compositional bias: basic and acidic residues.

The protein belongs to the LSB5 family. Interacts with SLA1 and LAS17.

It is found in the cytoplasm. It localises to the cell cortex. The protein localises to the cytoskeleton. Functionally, essential for the organization of the actin cytoskeleton, fluid phase endocytosis and vesicle trafficking, together with YSC84. In Saccharomyces cerevisiae (strain ATCC 204508 / S288c) (Baker's yeast), this protein is LAS seventeen-binding protein 5 (LSB5).